Here is a 1692-residue protein sequence, read N- to C-terminus: Regulating synaptic membrane exocytosis protein 1 (1692 aa).

The interval 1-26 (MSSAVGPRGPRPPTVPPPMQELPDLS) is disordered. Over residues 9-20 (GPRPPTVPPPMQ) the composition is skewed to pro residues. Positions 22-182 (LPDLSHLTEE…TKSGAWFFGS (161 aa)) constitute a RabBD domain. Residues 110-170 (KDDAPTCGIC…VCNLCRKQQE (61 aa)) form an FYVE-type zinc finger. Zn(2+) contacts are provided by cysteine 116, cysteine 119, cysteine 132, cysteine 135, cysteine 140, cysteine 143, cysteine 162, and cysteine 165. Positions 183 to 199 (GPQQTSQDGTLSDTATG) are enriched in polar residues. Residues 183–555 (GPQQTSQDGT…CEDVELESES (373 aa)) form a disordered region. The segment covering 204 to 217 (VPREKKARLQERSR) has biased composition (basic and acidic residues). Low complexity predominate over residues 223-234 (STAAASSQDAAP). Positions 305 to 357 (VEERERKERRESRRLEKGRSQDYPDTPEKRDEGKAADEEKQRKEEDYQTRYRS) are enriched in basic and acidic residues. Positions 377-388 (MHARVSRARHER) are enriched in basic residues. A compositionally biased stretch (low complexity) spans 412-430 (RAPAAARASPPDSPRAYSA). Residues 462–475 (PELKAQEPLRKQSR) show a composition bias toward basic and acidic residues. Residues 497–509 (RNDSLSSDQSESV) are compositionally biased toward polar residues. Serine 500 bears the Phosphoserine mark. Residues 515 to 527 (KPHRSKRGGKKRQ) are compositionally biased toward basic residues. Acidic residues predominate over residues 545–555 (SCEDVELESES). Residue serine 578 is modified to Phosphoserine. The PDZ domain occupies 605–691 (RTTMPKDSGA…EPQVEIIVSR (87 aa)). Residues 698–732 (RIPESSHPPLESSSSSFESQKMERPSISVISPTSP) form a disordered region. Residues 700 to 716 (PESSHPPLESSSSSFES) show a composition bias toward low complexity. 2 positions are modified to phosphoserine: serine 728 and serine 731. One can recognise a C2 1 domain in the interval 742 to 865 (LPGQLSVKLW…ALLDDEPHWY (124 aa)). The interval 870-1013 (HDESSLPLPQ…RTRDVDSQYL (144 aa)) is disordered. A Phosphoserine modification is found at serine 881. A compositionally biased stretch (polar residues) spans 935 to 944 (STTLTVPEQQ). Phosphoserine is present on serine 977. Positions 992–1009 (RHHDASRSPVDHRTRDVD) are enriched in basic and acidic residues. Residue serine 1031 is modified to Phosphoserine. Disordered stretches follow at residues 1118–1222 (NCLR…EHSS) and 1235–1278 (GGSA…PVRS). 2 stretches are compositionally biased toward basic and acidic residues: residues 1128–1144 (SPER…DRRR) and 1157–1170 (PEND…ERSS). Position 1252 is a phosphoserine (serine 1252). The span at 1252-1265 (SPTQSPPADTSFSS) shows a compositional bias: polar residues. Threonine 1254 is modified (phosphothreonine). Phosphoserine is present on residues serine 1256, serine 1308, serine 1310, serine 1311, serine 1339, serine 1340, and serine 1342. Disordered regions lie at residues 1332–1394 (CDNV…SGRS), 1408–1428 (LEHN…AGGK), and 1445–1495 (RSRS…GSIN). Residues 1345–1366 (SDVSAISRTSSASRLSSTSFMS) are compositionally biased toward low complexity. Serine 1416 is modified (phosphoserine). Residues 1477–1490 (EMRKMVRQPSREST) are compositionally biased toward basic and acidic residues. The C2 2 domain maps to 1538–1656 (AMGDIQIGME…DLSSMVIGWY (119 aa)). Phosphoserine occurs at positions 1677, 1680, 1683, and 1692.

As to quaternary structure, binds RAB3A, RAB3B and RAB3D that have been activated by GTP-binding. Interacts with RAB3C, RAB10, RAB26 and RAB37. Binds UNC13A. Interacts with TSPOAP1 and RIMBP2. Interacts with PPFIA3 and PPFIA4. Interacts with ERC1. Binds SNAP25, SYT1 and CACNA1B. Interaction with SYT1 is enhanced by calcium ions. Interaction with SNAP25 is weaker in the presence of calcium ions. Post-translationally, phosphorylated by BRSK1. As to expression, expressed in melanocytes. Detected in brain and retina.

It localises to the cell membrane. The protein localises to the synapse. Its subcellular location is the presynaptic cell membrane. Rab effector involved in exocytosis. May act as scaffold protein that regulates neurotransmitter release at the active zone. Essential for maintaining normal probability of neurotransmitter release and for regulating release during short-term synaptic plasticity. Plays a role in dendrite formation by melanocytes. This Homo sapiens (Human) protein is Regulating synaptic membrane exocytosis protein 1 (RIMS1).